Reading from the N-terminus, the 227-residue chain is PKHD-type hydroxylase Swit_4046 (227 aa).

The region spanning 78 to 178 (KVFPPLFNLY…RLCSFFWIQS (101 aa)) is the Fe2OG dioxygenase domain. Positions 96, 98, and 159 each coordinate Fe cation. Arg169 provides a ligand contact to 2-oxoglutarate.

It depends on Fe(2+) as a cofactor. Requires L-ascorbate as cofactor.

This is PKHD-type hydroxylase Swit_4046 from Rhizorhabdus wittichii (strain DSM 6014 / CCUG 31198 / JCM 15750 / NBRC 105917 / EY 4224 / RW1) (Sphingomonas wittichii).